A 427-amino-acid chain; its full sequence is Acyl-lipid 8-desaturase (427 aa).

A disordered region spans residues 1 to 24 (MGRGGDSSGQAHPAAELAVPSDRA). The 49-residue stretch at 36-84 (IVLYGKRVDVTKFQRTHPGGSKVFRIFQDRDATEQFESYHSKRAIKMME) folds into the Cytochrome b5 heme-binding domain. Positions 52 and 75 each coordinate heme. Residues 178–182 (HSVFK) carry the Histidine box-1 motif. A helical transmembrane segment spans residues 189-209 (VGWNNAAGYFLGFVQGYAVEW). The short motif at 213-218 (RHNTHH) is the Histidine box-2 element. 2 helical membrane-spanning segments follow: residues 261-281 (VPVMAILDLYWRLESIAYVAM) and 286-306 (MLPQALALVAHYAIVAWVFAG). Positions 373 to 377 (QTEHH) match the Histidine box-3 motif.

It belongs to the fatty acid desaturase type 1 family. Fe(2+) serves as cofactor.

The protein resides in the membrane. Its function is as follows. Fatty acid desaturase that introduces a cis double bond at the 8-position in 20-carbon polyunsaturated fatty acids incorporated in a glycerolipid that contain a Delta(8) double bond to yield (20:4(8,11,14,17)). The sequence is that of Acyl-lipid 8-desaturase from Rebecca salina (Marine microalga).